Reading from the N-terminus, the 234-residue chain is Sugar fermentation stimulation protein A (234 aa).

A DNA-binding region (H-T-H motif) is located at residues 201–220 (LLSEAQQRGVEILAYKAELS).

The protein belongs to the SfsA family.

Its function is as follows. Binds to DNA non-specifically. Could be a regulatory factor involved in maltose metabolism. The sequence is that of Sugar fermentation stimulation protein A from Escherichia coli (strain SMS-3-5 / SECEC).